The sequence spans 3681 residues: E3 ubiquitin-protein ligase UPL1 (3681 aa).

Residues 882 to 891 are compositionally biased toward basic and acidic residues; that stretch reads DEKKSVDRGS. Residues 882–912 are disordered; sequence DEKKSVDRGSDNSVSASSSTAERESDEDSSN. The segment covering 892 to 901 has biased composition (low complexity); the sequence is DNSVSASSST. The region spanning 1269 to 1310 is the UBA domain; sequence QLDESIVGMIVEMGFSRSRAEIALRRVGTNSVEMAMDWLFTN. A UIM domain is found at 1316–1335; sequence QEDDELAQALALSLGNSSET. Disordered stretches follow at residues 1332–1358, 1768–1802, 2015–2094, 2125–2151, 2253–2287, 2401–2435, 2483–2505, 2537–2606, 2975–3003, and 3228–3254; these read SSETPKLEDTEKPVDVPQEEAEPKEPP, MEVDEPTTKVKGKSKVGEPEKASSSRVGEPEKAEI, EQLK…MRIE, ENRADDDVDDDMGDEGEDDEGDDEDAD, RQTGRSSLDRSGSEVHGFQHPLFSRPSQTGNTASV, NTTEIQEQLHPDVPPSVGSETVLGDGNEGGQQSEE, PLPLNSTPNEIDRMEVGEGDGAP, IAPP…APEV, SPSSGVPEKLENKPVGEEASSETRKDAES, and TAGEVKESSAHGSSSKTSVDSQKKTDG. 3 stretches are compositionally biased toward basic and acidic residues: residues 1336 to 1345, 1782 to 1802, and 2017 to 2037; these read PKLEDTEKPV, KVGEPEKASSSRVGEPEKAEI, and LKSEVPNEKKNRDSDERHDSH. Polar residues predominate over residues 2038–2087; the sequence is GNSTETEADELNQNNSSLQQVTDAAGNGQEQAQVSSQSAGERGSSQTQAM. Positions 2130–2151 are enriched in acidic residues; it reads DDVDDDMGDEGEDDEGDDEDAD. Basic and acidic residues predominate over residues 2253–2265; sequence RQTGRSSLDRSGS. Residues 2277–2287 show a composition bias toward polar residues; it reads RPSQTGNTASV. Phosphoserine is present on Ser-2598. The span at 2982–3002 shows a compositional bias: basic and acidic residues; it reads EKLENKPVGEEASSETRKDAE. The segment covering 3237-3247 has biased composition (polar residues); the sequence is AHGSSSKTSVD. The region spanning 3340–3681 is the HECT domain; it reads SPQDLKGRLN…HEASEGFGFA (342 aa). The active-site Glycyl thioester intermediate is the Cys-3648.

This sequence belongs to the UPL family. TOM1/PTR1 subfamily. Widely expressed. Expressed in root, stem, cauline and rosette leaf, seedling and flower (at protein level).

The enzyme catalyses S-ubiquitinyl-[E2 ubiquitin-conjugating enzyme]-L-cysteine + [acceptor protein]-L-lysine = [E2 ubiquitin-conjugating enzyme]-L-cysteine + N(6)-ubiquitinyl-[acceptor protein]-L-lysine.. The protein operates within protein modification; protein ubiquitination. Functionally, probable E3 ubiquitin-protein ligase which mediates ubiquitination and subsequent proteasomal degradation of target proteins. This Arabidopsis thaliana (Mouse-ear cress) protein is E3 ubiquitin-protein ligase UPL1 (UPL1).